Reading from the N-terminus, the 392-residue chain is SH3 domain-binding protein 5-like (392 aa).

The segment at 1–57 (MADLKKAAGGRETPQGELRSEVVEDEGPRSPVAEEPGGSGSNSSETKLSPREEEELD) is disordered. The residue at position 13 (T13) is a Phosphothreonine. Basic and acidic residues predominate over residues 18–28 (LRSEVVEDEGP). A phosphoserine mark is found at S30 and S49. Coiled coils occupy residues 59–140 (RIQE…YERA) and 169–272 (WQEM…EQIH). Positions 275–332 (RRGLPPHPLGPRRSSPVGAEAGPEGIEDGDSGIEGAEGGGLEEGSSLGPGPGPDTDTL) are disordered. Positions 317-332 (EGSSLGPGPGPDTDTL) are enriched in low complexity. Phosphoserine occurs at positions 342, 349, 357, 361, and 377. The disordered stretch occupies residues 364–392 (GQELGAQSRGRRGSDIGVRGGRHQRSVSL). Over residues 383 to 392 (GGRHQRSVSL) the composition is skewed to basic residues.

It belongs to the SH3BP5 family.

Its function is as follows. Functions as a guanine nucleotide exchange factor (GEF) for RAB11A. This chain is SH3 domain-binding protein 5-like (Sh3bp5l), found in Mus musculus (Mouse).